A 64-amino-acid chain; its full sequence is Large ribosomal subunit protein bL35 (64 aa).

This sequence belongs to the bacterial ribosomal protein bL35 family.

This Acidothermus cellulolyticus (strain ATCC 43068 / DSM 8971 / 11B) protein is Large ribosomal subunit protein bL35.